The chain runs to 92 residues: Small ribosomal subunit protein uS19c (92 aa).

It belongs to the universal ribosomal protein uS19 family.

The protein localises to the plastid. It is found in the chloroplast. Protein S19 forms a complex with S13 that binds strongly to the 16S ribosomal RNA. The chain is Small ribosomal subunit protein uS19c from Populus alba (White poplar).